Consider the following 383-residue polypeptide: Protein delta homolog 2 (383 aa).

An N-terminal signal peptide occupies residues 1–26 (MPSGCRCLHLVCLLCILAAPVKPVRA). EGF-like domains lie at 27 to 58 (DDCS…LHCE), 62 to 89 (RMPG…KFCD), 91 to 129 (DEHV…RDCE), and 131 to 172 (KEGP…AHCE). Over 27-306 (DDCSSHCDLA…RQEAGLGKSS (280 aa)) the chain is Extracellular. 17 cysteine pairs are disulfide-bonded: Cys-29/Cys-40, Cys-33/Cys-46, Cys-48/Cys-57, Cys-66/Cys-71, Cys-79/Cys-88, Cys-95/Cys-107, Cys-101/Cys-117, Cys-119/Cys-128, Cys-135/Cys-148, Cys-142/Cys-160, Cys-162/Cys-171, Cys-178/Cys-189, Cys-183/Cys-198, Cys-200/Cys-209, Cys-216/Cys-227, Cys-221/Cys-236, and Cys-238/Cys-247. A glycan (N-linked (GlcNAc...) asparagine) is linked at Asn-157. Positions 174-210 (NVDDCLMRPCANGATCLDGINRFSCLCPEGFAGRFCT) constitute an EGF-like 5; calcium-binding domain. In terms of domain architecture, EGF-like 6; calcium-binding spans 212 to 248 (NLDDCASRPCQRGARCRDRVHDFDCLCPSGYGGKTCE). Residues 307 to 327 (LVAVVVFGAVTATLVLSTVLL) traverse the membrane as a helical segment. The Cytoplasmic portion of the chain corresponds to 328-383 (TLRAWRRGVCPPGPCCYPAPHYAPARQDQECQVSMLPAGLPLPPDLPPEPGKTTAL).

The protein localises to the membrane. Regulates adipogenesis. This Sus scrofa (Pig) protein is Protein delta homolog 2 (DLK2).